The sequence spans 463 residues: ATP-dependent protease ATPase subunit HslU (463 aa).

Residues valine 21, 63 to 68, aspartate 276, glutamate 341, and arginine 413 each bind ATP; that span reads GVGKTE.

It belongs to the ClpX chaperone family. HslU subfamily. In terms of assembly, a double ring-shaped homohexamer of HslV is capped on each side by a ring-shaped HslU homohexamer. The assembly of the HslU/HslV complex is dependent on binding of ATP.

Its subcellular location is the cytoplasm. Functionally, ATPase subunit of a proteasome-like degradation complex; this subunit has chaperone activity. The binding of ATP and its subsequent hydrolysis by HslU are essential for unfolding of protein substrates subsequently hydrolyzed by HslV. HslU recognizes the N-terminal part of its protein substrates and unfolds these before they are guided to HslV for hydrolysis. This Thermotoga neapolitana (strain ATCC 49049 / DSM 4359 / NBRC 107923 / NS-E) protein is ATP-dependent protease ATPase subunit HslU.